A 681-amino-acid chain; its full sequence is Peroxisomal acyl-coenzyme A oxidase 2 (681 aa).

Residues 1 to 28 (MGNPGDRVSLGETWSREVHPDIDSERHS) are disordered. Position 9 is a phosphoserine (S9). At T13 the chain carries Phosphothreonine. Over residues 14-28 (WSREVHPDIDSERHS) the composition is skewed to basic and acidic residues. N6-succinyllysine occurs at positions 66, 137, 303, 453, 561, and 667. The Microbody targeting signal motif lies at 679 to 681 (PKL).

The protein belongs to the acyl-CoA oxidase family. As to quaternary structure, homodimer. FAD serves as cofactor. In terms of processing, acetylation of Lys-667 is observed in liver mitochondria from fasted mice but not from fed mice.

Its subcellular location is the peroxisome. The catalysed reaction is (25R)-3alpha,7alpha,12alpha-trihydroxy-5beta-cholestan-26-oyl-CoA + A + H2O = (24R,25R)-3alpha,7alpha,12alpha,24-tetrahydroxy-5beta-cholestan-26-oyl-CoA + AH2. It carries out the reaction (25S)-3alpha,7alpha,12alpha-trihydroxy-5beta-cholestan-26-oyl-CoA + O2 = (24E)-3alpha,7alpha,12alpha-trihydroxy-5beta-cholest-24-en-26-oyl-CoA + H2O2. Oxidizes the CoA esters of the bile acid intermediates di- and tri-hydroxycoprostanic acids. Capable of oxidizing short as well as long chain 2-methyl branched fatty acids. The polypeptide is Peroxisomal acyl-coenzyme A oxidase 2 (Mus musculus (Mouse)).